The chain runs to 394 residues: Formate-dependent phosphoribosylglycinamide formyltransferase (394 aa).

Residues 21 to 22 (EL) and glutamate 81 contribute to the N(1)-(5-phospho-beta-D-ribosyl)glycinamide site. Residues arginine 113, lysine 154, 159–164 (SSGKGQ), 194–197 (EEFI), and glutamate 202 each bind ATP. One can recognise an ATP-grasp domain in the interval 118 to 307 (RLAAEELGLP…QFELHVRAIL (190 aa)). Residues glutamate 266 and glutamate 278 each contribute to the Mg(2+) site. Residues aspartate 285, lysine 355, and 362–363 (RR) each bind N(1)-(5-phospho-beta-D-ribosyl)glycinamide.

Belongs to the PurK/PurT family. Homodimer.

The enzyme catalyses N(1)-(5-phospho-beta-D-ribosyl)glycinamide + formate + ATP = N(2)-formyl-N(1)-(5-phospho-beta-D-ribosyl)glycinamide + ADP + phosphate + H(+). The protein operates within purine metabolism; IMP biosynthesis via de novo pathway; N(2)-formyl-N(1)-(5-phospho-D-ribosyl)glycinamide from N(1)-(5-phospho-D-ribosyl)glycinamide (formate route): step 1/1. In terms of biological role, involved in the de novo purine biosynthesis. Catalyzes the transfer of formate to 5-phospho-ribosyl-glycinamide (GAR), producing 5-phospho-ribosyl-N-formylglycinamide (FGAR). Formate is provided by PurU via hydrolysis of 10-formyl-tetrahydrofolate. This Pelobacter propionicus (strain DSM 2379 / NBRC 103807 / OttBd1) protein is Formate-dependent phosphoribosylglycinamide formyltransferase.